The primary structure comprises 131 residues: Large ribosomal subunit protein bL17 (131 aa).

This sequence belongs to the bacterial ribosomal protein bL17 family. Part of the 50S ribosomal subunit. Contacts protein L32.

The polypeptide is Large ribosomal subunit protein bL17 (Burkholderia mallei (strain NCTC 10229)).